Reading from the N-terminus, the 1051-residue chain is Putative transcription factor SEF1 (1051 aa).

Residues 1 to 10 (MSTDVSERGA) show a composition bias toward basic and acidic residues. Disordered regions lie at residues 1–54 (MSTD…SEES) and 67–90 (GQASPDRSKVSKQQNGASGHRPVT). The span at 11 to 21 (EAGSSSGLLSS) shows a compositional bias: low complexity. The segment at residues 92–122 (CTHCRQHKIKCNASENFPSSCSRCERMGLQC) is a DNA-binding region (zn(2)-C6 fungal-type). Residues 206 to 218 (SSVKSSVNTPSGS) are compositionally biased toward low complexity. Disordered stretches follow at residues 206–227 (SSVKSSVNTPSGSYSASAVDVS), 738–759 (EKNRKEQPVHTAATGSQDTEKR), and 927–968 (ASGN…QPAP).

The protein resides in the nucleus. Putative transcription factor. The polypeptide is Putative transcription factor SEF1 (SEF1) (Eremothecium gossypii (strain ATCC 10895 / CBS 109.51 / FGSC 9923 / NRRL Y-1056) (Yeast)).